Consider the following 362-residue polypeptide: Ferrochelatase (362 aa).

The Fe cation site is built by H228 and E309.

This sequence belongs to the ferrochelatase family.

It localises to the cytoplasm. It catalyses the reaction heme b + 2 H(+) = protoporphyrin IX + Fe(2+). It participates in porphyrin-containing compound metabolism; protoheme biosynthesis; protoheme from protoporphyrin-IX: step 1/1. In terms of biological role, catalyzes the ferrous insertion into protoporphyrin IX. This is Ferrochelatase from Bordetella bronchiseptica (strain ATCC BAA-588 / NCTC 13252 / RB50) (Alcaligenes bronchisepticus).